An 857-amino-acid polypeptide reads, in one-letter code: Leucine--tRNA ligase (857 aa).

A 'HIGH' region motif is present at residues 42–52; that stretch reads PYPSGRLHMGH. Residues 617 to 621 carry the 'KMSKS' region motif; it reads KMSKS. ATP is bound at residue K620.

Belongs to the class-I aminoacyl-tRNA synthetase family.

Its subcellular location is the cytoplasm. The catalysed reaction is tRNA(Leu) + L-leucine + ATP = L-leucyl-tRNA(Leu) + AMP + diphosphate. This is Leucine--tRNA ligase from Vibrio vulnificus (strain CMCP6).